The following is a 423-amino-acid chain: Imidazolonepropionase (423 aa).

His-87 and His-89 together coordinate Fe(3+). Positions 87 and 89 each coordinate Zn(2+). Positions 96, 159, and 192 each coordinate 4-imidazolone-5-propanoate. Position 159 (Tyr-159) interacts with N-formimidoyl-L-glutamate. His-257 provides a ligand contact to Fe(3+). Residue His-257 participates in Zn(2+) binding. Glu-260 contacts 4-imidazolone-5-propanoate. Asp-331 is a binding site for Fe(3+). Asp-331 serves as a coordination point for Zn(2+). The N-formimidoyl-L-glutamate site is built by Asn-333 and Gly-335. 4-imidazolone-5-propanoate is bound at residue Ser-336.

It belongs to the metallo-dependent hydrolases superfamily. HutI family. It depends on Zn(2+) as a cofactor. Requires Fe(3+) as cofactor.

Its subcellular location is the cytoplasm. The enzyme catalyses 4-imidazolone-5-propanoate + H2O = N-formimidoyl-L-glutamate. It functions in the pathway amino-acid degradation; L-histidine degradation into L-glutamate; N-formimidoyl-L-glutamate from L-histidine: step 3/3. Its function is as follows. Catalyzes the hydrolytic cleavage of the carbon-nitrogen bond in imidazolone-5-propanoate to yield N-formimidoyl-L-glutamate. It is the third step in the universal histidine degradation pathway. This is Imidazolonepropionase from Porphyromonas gingivalis (strain ATCC BAA-308 / W83).